Here is a 2035-residue protein sequence, read N- to C-terminus: Ral GTPase-activating protein subunit alpha-1 (2035 aa).

Residues 343–384 (LVSREESKNDTVDKADKTAEPEQSHSNTSTLTEREPSSSSLC) are disordered. Basic and acidic residues predominate over residues 345–365 (SREESKNDTVDKADKTAEPEQ). Over residues 366 to 384 (SHSNTSTLTEREPSSSSLC) the composition is skewed to polar residues. Phosphoserine occurs at positions 710 and 720. A disordered region spans residues 714–754 (SFSRGWSRDQPGQAPMRQRSATTTGSPGTEKARSIVRQKTV). T753 carries the post-translational modification Phosphothreonine. S772 is modified (phosphoserine). T777 is subject to Phosphothreonine. S796 is modified (phosphoserine). The segment covering 807-817 (ERAKVNKEDTS) has biased composition (basic and acidic residues). Disordered stretches follow at residues 807–834 (ERAK…SANV) and 848–911 (SGNA…SHSD). 2 stretches are compositionally biased toward polar residues: residues 824-833 (NSETGGSSAN) and 849-862 (GNAS…SSPG). S859, S860, and S863 each carry phosphoserine. The segment covering 894 to 911 (SPASAGSSDLMSSDSHSD) has biased composition (low complexity). Phosphoserine occurs at positions 985, 989, 993, and 999. A disordered region spans residues 986-1008 (ESASPVHSALGSRSQTPSPSTLN). Residue T1001 is modified to Phosphothreonine. Phosphoserine occurs at positions 1003 and 1477. The minimal domain that binds to TCF3/E12 stretch occupies residues 1326 to 2034 (FTNKTVAHVA…PYHHFPADAD (709 aa)). Positions 1713–1746 (SEKQENDVINAILKQYTEEKEFVEKHFNDLNMKA) form a coiled coil. A Rap-GAP domain is found at 1795–2003 (LRNLDSRQCR…EERARYLQTI (209 aa)).

In terms of assembly, component of the heterodimeric RalGAP1 complex with RALGAPB. Heterodimerization is required for activity. Interacts with the HLH region of TCF3/isoform E12. Highly expressed in brain, thymus and testis with lower levels in lung and spleen and barely detectable in heart or liver (at protein level).

The protein resides in the cytoplasm. The protein localises to the nucleus. Catalytic subunit of the heterodimeric RalGAP1 complex which acts as a GTPase activator for the Ras-like small GTPases RALA and RALB. This is Ral GTPase-activating protein subunit alpha-1 (Ralgapa1) from Rattus norvegicus (Rat).